Consider the following 307-residue polypeptide: Probable 2-methylisocitrate lyase 2 (307 aa).

53–55 is a substrate binding site; sequence SGA. Positions 92 and 94 each coordinate Mg(2+). Substrate-binding positions include 129–130, R164, E194, 216–218, R247, and R276; these read CG and NMT.

It belongs to the isocitrate lyase/PEP mutase superfamily. Methylisocitrate lyase family. As to quaternary structure, homotetramer; dimer of dimers. The cofactor is Mg(2+).

The catalysed reaction is (2S,3R)-3-hydroxybutane-1,2,3-tricarboxylate = pyruvate + succinate. It functions in the pathway organic acid metabolism; propanoate degradation. Functionally, involved in the catabolism of short chain fatty acids (SCFA) via the 2-methylcitrate cycle I (propionate degradation route). Catalyzes the thermodynamically favored C-C bond cleavage of (2R,3S)-2-methylisocitrate to yield pyruvate and succinate via an alpha-carboxy-carbanion intermediate. This chain is Probable 2-methylisocitrate lyase 2, found in Corynebacterium glutamicum (strain ATCC 13032 / DSM 20300 / JCM 1318 / BCRC 11384 / CCUG 27702 / LMG 3730 / NBRC 12168 / NCIMB 10025 / NRRL B-2784 / 534).